The primary structure comprises 77 residues: Chassatide C13 (77 aa).

The first 24 residues, 1–24 (MAKFATQLLLFVLIASLVMLEVHA), serve as a signal peptide directing secretion. The propeptide at 25-44 (SNTFQVPDLGKRLLMNRDPN) is removed in mature form. Residues 45–75 (GFPCAESCVYIPCTVTALLGCSCRNRVCYRN) constitute a cross-link (cyclopeptide (Gly-Asn)). Intrachain disulfides connect Cys48/Cys65, Cys52/Cys67, and Cys57/Cys72. Residues 76-77 (EL) constitute a propeptide, removed in mature form.

This is a cyclic peptide. In terms of tissue distribution, expressed in fruit and pedicel but not in root, leaf and stem (at protein level).

Its function is as follows. Probably participates in a plant defense mechanism. This chain is Chassatide C13, found in Chassalia chartacea (Chassalia curviflora).